We begin with the raw amino-acid sequence, 381 residues long: Phthiodiolone/phenolphthiodiolone dimycocerosates ketoreductase (381 aa).

The protein belongs to the mer family. Phthiodiolone/phenolphthiodiolone dimycocerosates ketoreductase subfamily.

Catalyzes the reduction of the keto moiety of phthiodiolone dimycocerosates (DIM B) and glycosylated phenolphthiodiolone dimycocerosates to form the intermediate compounds phthiotriol and glycosylated phenolphthiotriol dimycocerosates during phthiocerol dimycocerosates (DIM A) and glycosylated phenolphthiocerol dimycocerosates (PGL) biosynthesis. The sequence is that of Phthiodiolone/phenolphthiodiolone dimycocerosates ketoreductase from Mycobacterium tuberculosis (strain CDC 1551 / Oshkosh).